The chain runs to 393 residues: Sister chromatid cohesion protein DCC1 (393 aa).

It belongs to the DCC1 family. In terms of assembly, component of the CTF18-RFC complex which consists of CTF8, CTF18, DSCC1 and the RFC complex. Interacts with CTF8 and CTF18. Interacts with DDX11.

The protein resides in the nucleus. In terms of biological role, loads PCNA onto primed templates regulating velocity, spacing and restart activity of replication forks. May couple DNA replication to sister chromatid cohesion through regulation of the acetylation of the cohesin subunit SMC3. The sequence is that of Sister chromatid cohesion protein DCC1 (DSCC1) from Homo sapiens (Human).